The sequence spans 657 residues: DNA mismatch repair protein MutL (657 aa).

It belongs to the DNA mismatch repair MutL/HexB family.

In terms of biological role, this protein is involved in the repair of mismatches in DNA. It is required for dam-dependent methyl-directed DNA mismatch repair. May act as a 'molecular matchmaker', a protein that promotes the formation of a stable complex between two or more DNA-binding proteins in an ATP-dependent manner without itself being part of a final effector complex. The chain is DNA mismatch repair protein MutL from Streptococcus agalactiae serotype Ia (strain ATCC 27591 / A909 / CDC SS700).